The sequence spans 196 residues: Beta-crystallin A4 (196 aa).

At threonine 2 the chain carries N-acetylthreonine. Positions 2 to 11 (TLQCTKSAGH) are N-terminal arm. Beta/gamma crystallin 'Greek key' domains are found at residues 12-51 (WRVVVWDEEGFQGRRHEFTAECPSVLDLGFETVRSLKVLS) and 52-98 (GAWV…RPVA). The segment at 99-104 (CANHRD) is connecting peptide. Beta/gamma crystallin 'Greek key' domains lie at 105-146 (SRLT…HVQS) and 147-195 (GAWV…RRIQ).

Homo/heterodimer, or complexes of higher-order. The structure of beta-crystallin oligomers seems to be stabilized through interactions between the N-terminal arms.

Crystallins are the dominant structural components of the vertebrate eye lens. This is Beta-crystallin A4 (Cryba4) from Rattus norvegicus (Rat).